The sequence spans 2123 residues: Toxin Afp18 (2123 aa).

Residues 864 to 919 (FFDNSDQDADQPRVRRKREMTDEIMLSDGSSRSEAKALPDENELDTDQSKSRPESA) form a disordered region. Residues 1771 to 2123 (VFDSANTNRS…GNSTQSSGLS (353 aa)) form a tyrosine glycosyltransferase region. UDP-N-acetyl-alpha-D-glucosamine-binding positions include 1850–1852 (IWV) and 1940–1941 (SD). Residues Asp1957 and Asp1959 each contribute to the a divalent metal cation site. The short motif at 1957 to 1960 (DIDD) is the DxDD motif element. Asn1993 is a binding site for UDP-N-acetyl-alpha-D-glucosamine.

The cofactor is a divalent metal cation.

Its subcellular location is the secreted. It localises to the host cell membrane. The catalysed reaction is L-tyrosyl-[protein] + UDP-N-acetyl-alpha-D-glucosamine = O-(N-acetyl-alpha-D-glucosaminyl)-L-tyrosyl-[protein] + UDP + H(+). In terms of biological role, toxin component of the prophage tail-derived protein translocation system Afp, which is the causative agent of enteric redmouth disease in salmonid fish species. Mono-O-GlcNAcylates the small GTPase RhoA in eukaryotic host cells at Tyr-34, using UDP-N-acetylglucosamine (UDP-GlcNAc) as the sugar donor. Glycosylation of RhoA results in impaired effector and regulator interaction and inactivation of downstream RhoA signaling which leads to actin filament depolymerization and blocks cytokinesis and gastrulation during zebrafish embryo development. To a lesser extent, is also able to glycosylate other Rho family GTPases (RhoB, RhoC, Rac1, Rac2, Rac3, and Cdc42) in vitro at a switch I tyrosine residue, but not Ras proteins. In Yersinia ruckeri serotype O1 (strain ATCC 29473 / DSM 18506 / JCM 15110 / CCUG 14190 / NCIMB 2194 / NCTC 12986 / 2396-61), this protein is Toxin Afp18.